Consider the following 125-residue polypeptide: MNSLEQAEDLKAFERRLTEYVSCLQPATGRWRMILIVVSVCTATGAWNWLIDPETQKVSFFTSLWNHPFFTISCITLIGLFFAGIHKRVVAPSIIAARCRTVLAEYNMSCDDTGKLILKPRPHVQ.

The next 2 membrane-spanning stretches (helical) occupy residues 33–53 (MILI…LIDP) and 65–85 (WNHP…FAGI).

Belongs to the CNEP1R1 family.

The protein localises to the nucleus membrane. It localises to the cytoplasm. In terms of biological role, may form with the serine/threonine protein phosphatase ctdnep1 an active complex dephosphorylating and activating lipins. Lipins are phosphatidate phosphatases that catalyze the conversion of phosphatidic acid to diacylglycerol and control the metabolism of fatty acids at different levels. May indirectly modulate the lipid composition of nuclear and/or endoplasmic reticulum membranes and be required for proper nuclear membrane morphology and/or dynamics. May also indirectly regulate the production of lipid droplets and triacylglycerol. In Xenopus tropicalis (Western clawed frog), this protein is Nuclear envelope phosphatase-regulatory subunit 1 (cnep1r1).